Here is a 363-residue protein sequence, read N- to C-terminus: tRNA-specific 2-thiouridylase MnmA (363 aa).

Residues 6 to 13 and L32 each bind ATP; that span reads AMSGGVDS. C101 (nucleophile) is an active-site residue. Cysteines 101 and 193 form a disulfide. G125 provides a ligand contact to ATP. The interval 143–145 is interaction with tRNA; the sequence is KDQ. Residue C193 is the Cysteine persulfide intermediate of the active site.

Belongs to the MnmA/TRMU family.

It localises to the cytoplasm. The enzyme catalyses S-sulfanyl-L-cysteinyl-[protein] + uridine(34) in tRNA + AH2 + ATP = 2-thiouridine(34) in tRNA + L-cysteinyl-[protein] + A + AMP + diphosphate + H(+). In terms of biological role, catalyzes the 2-thiolation of uridine at the wobble position (U34) of tRNA, leading to the formation of s(2)U34. The chain is tRNA-specific 2-thiouridylase MnmA from Mycobacterium marinum (strain ATCC BAA-535 / M).